We begin with the raw amino-acid sequence, 227 residues long: Lipoprotein-releasing system ATP-binding protein LolD (227 aa).

The region spanning 5 to 227 is the ABC transporter domain; sequence LICQNITKHY…QDGILRESNS (223 aa). 41–48 is an ATP binding site; it reads GSSGSGKS.

Belongs to the ABC transporter superfamily. Lipoprotein translocase (TC 3.A.1.125) family. The complex is composed of two ATP-binding proteins (LolD) and two transmembrane proteins (LolC and LolE).

The protein localises to the cell inner membrane. In terms of biological role, part of the ABC transporter complex LolCDE involved in the translocation of mature outer membrane-directed lipoproteins, from the inner membrane to the periplasmic chaperone, LolA. Responsible for the formation of the LolA-lipoprotein complex in an ATP-dependent manner. This chain is Lipoprotein-releasing system ATP-binding protein LolD, found in Histophilus somni (strain 129Pt) (Haemophilus somnus).